Reading from the N-terminus, the 138-residue chain is ATP synthase epsilon chain (138 aa).

The protein belongs to the ATPase epsilon chain family. F-type ATPases have 2 components, CF(1) - the catalytic core - and CF(0) - the membrane proton channel. CF(1) has five subunits: alpha(3), beta(3), gamma(1), delta(1), epsilon(1). CF(0) has four main subunits: a(1), b(1), b'(1) and c(9-12).

It is found in the cellular thylakoid membrane. Functionally, produces ATP from ADP in the presence of a proton gradient across the membrane. In terms of biological role, the complex from the organism is particularly stable to disruption and remains functional after 6 hours at 55 degrees Celsius. This is ATP synthase epsilon chain from Thermosynechococcus vestitus (strain NIES-2133 / IAM M-273 / BP-1).